The chain runs to 265 residues: tRNA pseudouridine synthase A (265 aa).

Catalysis depends on Asp58, which acts as the Nucleophile. Tyr116 provides a ligand contact to substrate.

It belongs to the tRNA pseudouridine synthase TruA family. In terms of assembly, homodimer.

It catalyses the reaction uridine(38/39/40) in tRNA = pseudouridine(38/39/40) in tRNA. Functionally, formation of pseudouridine at positions 38, 39 and 40 in the anticodon stem and loop of transfer RNAs. This chain is tRNA pseudouridine synthase A, found in Neisseria meningitidis serogroup B (strain ATCC BAA-335 / MC58).